Here is a 438-residue protein sequence, read N- to C-terminus: uncharacterized protein (438 aa).

Disordered regions lie at residues 1 to 22 and 156 to 264; these read MRDN…TYDP and DTAK…PWRP. The segment covering 156–170 has biased composition (basic and acidic residues); sequence DTAKSNEKLQGDESK. The span at 171-189 shows a compositional bias: low complexity; the sequence is SSNGSSSTSTTTQRGSTNS. The span at 191-206 shows a compositional bias: basic and acidic residues; the sequence is TKVKALKIEVKKKSDS.

The protein belongs to the adhesin P1 family.

This is an uncharacterized protein from Mycoplasma pneumoniae (strain ATCC 29342 / M129 / Subtype 1) (Mycoplasmoides pneumoniae).